The chain runs to 232 residues: Large ribosomal subunit protein uL1 (232 aa).

The protein belongs to the universal ribosomal protein uL1 family. As to quaternary structure, part of the 50S ribosomal subunit.

In terms of biological role, binds directly to 23S rRNA. The L1 stalk is quite mobile in the ribosome, and is involved in E site tRNA release. Functionally, protein L1 is also a translational repressor protein, it controls the translation of the L11 operon by binding to its mRNA. This is Large ribosomal subunit protein uL1 from Marinobacter nauticus (strain ATCC 700491 / DSM 11845 / VT8) (Marinobacter aquaeolei).